The following is a 365-amino-acid chain: DNA replication and repair protein RecF (365 aa).

Residue 30 to 37 coordinates ATP; the sequence is GANGQGKT.

This sequence belongs to the RecF family.

It localises to the cytoplasm. The RecF protein is involved in DNA metabolism; it is required for DNA replication and normal SOS inducibility. RecF binds preferentially to single-stranded, linear DNA. It also seems to bind ATP. In Geobacter sulfurreducens (strain ATCC 51573 / DSM 12127 / PCA), this protein is DNA replication and repair protein RecF.